Consider the following 540-residue polypeptide: Chaperonin GroEL 2 (540 aa).

Residues 30-33 (TLGP), lysine 51, 87-91 (DGTTT), glycine 415, 479-481 (NAA), and aspartate 495 contribute to the ATP site.

This sequence belongs to the chaperonin (HSP60) family. As to quaternary structure, forms a cylinder of 14 subunits composed of two heptameric rings stacked back-to-back. Interacts with the co-chaperonin GroES.

It localises to the cytoplasm. It catalyses the reaction ATP + H2O + a folded polypeptide = ADP + phosphate + an unfolded polypeptide.. Together with its co-chaperonin GroES, plays an essential role in assisting protein folding. The GroEL-GroES system forms a nano-cage that allows encapsulation of the non-native substrate proteins and provides a physical environment optimized to promote and accelerate protein folding. This is Chaperonin GroEL 2 from Burkholderia vietnamiensis (strain G4 / LMG 22486) (Burkholderia cepacia (strain R1808)).